The sequence spans 247 residues: Phosphoribosylaminoimidazole-succinocarboxamide synthase (247 aa).

Belongs to the SAICAR synthetase family.

The catalysed reaction is 5-amino-1-(5-phospho-D-ribosyl)imidazole-4-carboxylate + L-aspartate + ATP = (2S)-2-[5-amino-1-(5-phospho-beta-D-ribosyl)imidazole-4-carboxamido]succinate + ADP + phosphate + 2 H(+). It functions in the pathway purine metabolism; IMP biosynthesis via de novo pathway; 5-amino-1-(5-phospho-D-ribosyl)imidazole-4-carboxamide from 5-amino-1-(5-phospho-D-ribosyl)imidazole-4-carboxylate: step 1/2. This Gloeobacter violaceus (strain ATCC 29082 / PCC 7421) protein is Phosphoribosylaminoimidazole-succinocarboxamide synthase.